A 103-amino-acid polypeptide reads, in one-letter code: V-type sodium ATPase subunit G (103 aa).

It belongs to the V-ATPase F subunit family.

In terms of biological role, involved in ATP-driven sodium extrusion. The chain is V-type sodium ATPase subunit G (ntpG) from Enterococcus hirae (strain ATCC 9790 / DSM 20160 / JCM 8729 / LMG 6399 / NBRC 3181 / NCIMB 6459 / NCDO 1258 / NCTC 12367 / WDCM 00089 / R).